The following is a 352-amino-acid chain: Chalcone synthase C (352 aa).

C170 is a catalytic residue.

It belongs to the thiolase-like superfamily. Chalcone/stilbene synthases family.

The enzyme catalyses (E)-4-coumaroyl-CoA + 3 malonyl-CoA + 3 H(+) = 2',4,4',6'-tetrahydroxychalcone + 3 CO2 + 4 CoA. Its pathway is secondary metabolite biosynthesis; flavonoid biosynthesis. The primary product of this enzyme is 4,2',4',6'-tetrahydroxychalcone (also termed naringenin-chalcone or chalcone) which can under specific conditions spontaneously isomerize into naringenin. The chain is Chalcone synthase C (CHSC) from Ipomoea purpurea (Common morning glory).